Here is a 327-residue protein sequence, read N- to C-terminus: Apoptosis facilitator Bcl-2-like protein 14 (327 aa).

Ser44 carries the phosphoserine modification. The short motif at 212–226 (IVELLKYSGDQLERK) is the BH3 element. A BH2 motif is present at residues 308-315 (WIQQHGGW).

The protein belongs to the Bcl-2 family. Phosphorylated by MELK, leading to inhibit its pro-apoptotic function. Isoform 1 is widely expressed. Isoform 2 is testis-specific.

It localises to the cytoplasm. It is found in the cytosol. The protein localises to the endomembrane system. Its function is as follows. Plays a role in apoptosis. The chain is Apoptosis facilitator Bcl-2-like protein 14 (BCL2L14) from Homo sapiens (Human).